Consider the following 282-residue polypeptide: ATP phosphoribosyltransferase (282 aa).

This sequence belongs to the ATP phosphoribosyltransferase family. Long subfamily. Mg(2+) is required as a cofactor.

It is found in the cytoplasm. The enzyme catalyses 1-(5-phospho-beta-D-ribosyl)-ATP + diphosphate = 5-phospho-alpha-D-ribose 1-diphosphate + ATP. The protein operates within amino-acid biosynthesis; L-histidine biosynthesis; L-histidine from 5-phospho-alpha-D-ribose 1-diphosphate: step 1/9. Its activity is regulated as follows. Feedback inhibited by histidine. Its function is as follows. Catalyzes the condensation of ATP and 5-phosphoribose 1-diphosphate to form N'-(5'-phosphoribosyl)-ATP (PR-ATP). Has a crucial role in the pathway because the rate of histidine biosynthesis seems to be controlled primarily by regulation of HisG enzymatic activity. This Saccharopolyspora erythraea (strain ATCC 11635 / DSM 40517 / JCM 4748 / NBRC 13426 / NCIMB 8594 / NRRL 2338) protein is ATP phosphoribosyltransferase.